The sequence spans 722 residues: Dynein axonemal intermediate chain 7 (722 aa).

Over residues 1–15 the composition is skewed to basic residues; that stretch reads MGPKAKKSGSKKKKV. The segment at 1–20 is disordered; the sequence is MGPKAKKSGSKKKKVTKAER.

Belongs to the DNAI7 family. Part of the multisubunit axonemal dynein complex formed at least of two heavy chains and a number of intermediate and light chains. Associates with tubulin. Interacts with microtubule. Ubiquitinated. Ubiquitination leads to its degradation through the 26S proteasome. Ubiquitin-proteasome-mediated DNAI7 degradation occurs in mitosis.

The protein resides in the cell projection. The protein localises to the cilium. It localises to the cytoplasm. Via its association with the multisubunit axonemal dynein complex, is potentially involved in the regulation of cilia function. May act as a cell cycle regulator. The chain is Dynein axonemal intermediate chain 7 from Macaca fascicularis (Crab-eating macaque).